Consider the following 77-residue polypeptide: Cell division topological specificity factor (77 aa).

Belongs to the MinE family.

Its function is as follows. Prevents the cell division inhibition by proteins MinC and MinD at internal division sites while permitting inhibition at polar sites. This ensures cell division at the proper site by restricting the formation of a division septum at the midpoint of the long axis of the cell. The sequence is that of Cell division topological specificity factor from Helicobacter acinonychis (strain Sheeba).